The following is a 499-amino-acid chain: Glycerol kinase (499 aa).

Residue Thr-12 coordinates ADP. 3 residues coordinate ATP: Thr-12, Thr-13, and Ser-14. Residue Thr-12 coordinates sn-glycerol 3-phosphate. Arg-16 is a binding site for ADP. 4 residues coordinate sn-glycerol 3-phosphate: Arg-82, Glu-83, Tyr-134, and Asp-245. Arg-82, Glu-83, Tyr-134, Asp-245, and Gln-246 together coordinate glycerol. ADP-binding residues include Thr-267 and Gly-311. ATP-binding residues include Thr-267, Gly-311, Gln-315, and Gly-412. ADP-binding residues include Gly-412 and Asn-416.

The protein belongs to the FGGY kinase family.

It catalyses the reaction glycerol + ATP = sn-glycerol 3-phosphate + ADP + H(+). Its pathway is polyol metabolism; glycerol degradation via glycerol kinase pathway; sn-glycerol 3-phosphate from glycerol: step 1/1. With respect to regulation, inhibited by fructose 1,6-bisphosphate (FBP). Key enzyme in the regulation of glycerol uptake and metabolism. Catalyzes the phosphorylation of glycerol to yield sn-glycerol 3-phosphate. In Brucella anthropi (strain ATCC 49188 / DSM 6882 / CCUG 24695 / JCM 21032 / LMG 3331 / NBRC 15819 / NCTC 12168 / Alc 37) (Ochrobactrum anthropi), this protein is Glycerol kinase.